The following is a 241-amino-acid chain: MORN repeat-containing protein 3 (241 aa).

The segment at 6–35 is interaction with MDM2; the sequence is CPRKVEPPWKGWDRKAQKNGLRHQVFAVNG. 7 MORN repeats span residues 38–60, 62–84, 91–113, 114–136, 137–159, 160–182, and 184–205; these read YVGE…KSGA, YEGD…DPET, YSGW…PKEY, YEGE…NGDI, YEGQ…NGNR, YEGI…DHGQ, and FEGY…GRDE. The tract at residues 76-100 is interaction with SIRT1; sequence SLSHPDPETGKLRRVYSGWWKGDKK. An interaction with TP53 region spans residues 206-240; sequence APEPTQFPIPKVEILDPDGVLKEALDKLMKPEEEE.

As to quaternary structure, interacts with MEIG1. Interacts with TP53, MDM2 and SIRT1; the interactions mediate post-transcriptional modifications of TP53 by MDM2 and SIRT1. As to expression, expressed in testis (at protein level).

The protein localises to the cytoplasmic vesicle. It localises to the secretory vesicle. The protein resides in the acrosome. Assembles a suppression complex (suppresome) by tethering SIRT1 and MDM2 to regulate composite modifications of p53/TP53. Confers both deacetylation-mediated functional inactivation, by SIRT1, and ubiquitination-dependent degradation, by MDM2, of p53/TP53, promoting a proliferative and cell survival behaviors. May play a role in the regulation of spermatogenesis. This Mus musculus (Mouse) protein is MORN repeat-containing protein 3 (Morn3).